The following is a 382-amino-acid chain: Deoxyhypusine synthase (382 aa).

NAD(+)-binding positions include 108-112 (SNLIS), 134-136 (TAG), glutamate 140, and aspartate 257. Residue 139–140 (EE) participates in spermidine binding. Aspartate 262 contacts spermidine. NAD(+) is bound at residue glycine 304. Histidine 309 serves as a coordination point for spermidine. Residue 329–330 (TG) participates in NAD(+) binding. Spermidine is bound by residues 335–337 (GSD) and 344–350 (EAVSWGK). The active-site Nucleophile is lysine 350. 363 to 364 (DV) serves as a coordination point for NAD(+).

The protein belongs to the deoxyhypusine synthase family. Requires NAD(+) as cofactor.

The enzyme catalyses [eIF5A protein]-L-lysine + spermidine = [eIF5A protein]-deoxyhypusine + propane-1,3-diamine. It functions in the pathway protein modification; eIF5A hypusination. Its function is as follows. Catalyzes the NAD-dependent oxidative cleavage of spermidine and the subsequent transfer of the butylamine moiety of spermidine to the epsilon-amino group of a specific lysine residue of the eIF-5A precursor protein to form the intermediate deoxyhypusine residue. The chain is Deoxyhypusine synthase (DYS1) from Eremothecium gossypii (strain ATCC 10895 / CBS 109.51 / FGSC 9923 / NRRL Y-1056) (Yeast).